The chain runs to 866 residues: Autophagy-related protein 9 (866 aa).

The Cytoplasmic segment spans residues 1–94 (MMSSGHKGPN…KGLWCIIVKW (94 aa)). A helical transmembrane segment spans residues 95–115 (AVELLSLGFIICFSGFFLLYV). The Lumenal portion of the chain corresponds to 116 to 153 (DWNGLQNAKCGMDAVESGTKPCDLVKEAIHPHPLSPFT). A helical transmembrane segment spans residues 154–174 (LTTAIIVGYLALFSVYWLFCF). Over 175–319 (LRFFAQLKDT…VSNPTTLKKR (145 aa)) the chain is Cytoplasmic. An intramembrane segment occupies 320–340 (LFVVGLAMLLLSPFLVIFMLV). Topologically, residues 341–404 (YLFLRHAEQF…LKQFPSPIIS (64 aa)) are cytoplasmic. A helical transmembrane segment spans residues 405–425 (IIAKFVSFVSGGFAAVLIIIA). The Lumenal portion of the chain corresponds to 426–433 (FLEESLLE). A helical transmembrane segment spans residues 434–454 (GHIFGRNLFWYAAVFGTITAI). The Cytoplasmic segment spans residues 455-507 (SRAAISDELLVLDPVGTMSLVVQNTHYMPKRWRGKENKDDVRLELETLFQYTG). The stretch at 508–528 (MMLLEEIASIFITPFLLMFVV) is an intramembrane region. The Cytoplasmic portion of the chain corresponds to 529 to 866 (PKRVDDILQF…ETSTSSTTLR (338 aa)). Residues 744–781 (QPEGEDSYGSQHPLDGRNQWWGRGNHSQISTAHPATTN) form a disordered region. Residues 768 to 781 (NHSQISTAHPATTN) show a composition bias toward polar residues.

Belongs to the ATG9 family. Homotrimer; forms a homotrimer with a central pore that forms a path between the two membrane leaflets. Expressed in roots, leaves, stems and flowers.

The protein localises to the preautophagosomal structure membrane. In terms of biological role, phospholipid scramblase involved in autophagy by mediating autophagosomal membrane expansion. Cycles between the preautophagosomal structure/phagophore assembly site (PAS) and the cytoplasmic vesicle pool and supplies membrane for the growing autophagosome. Lipid scramblase activity plays a key role in preautophagosomal structure/phagophore assembly by distributing the phospholipids that arrive through ATG2 from the cytoplasmic to the luminal leaflet of the bilayer, thereby driving autophagosomal membrane expansion. In addition to autophagy, also plays a role in necrotic cell death. Plays an essential role in plant nutrient recycling. This chain is Autophagy-related protein 9, found in Arabidopsis thaliana (Mouse-ear cress).